A 469-amino-acid polypeptide reads, in one-letter code: ATP synthase subunit beta (469 aa).

Residue 155 to 162 (GGAGVGKT) coordinates ATP.

The protein belongs to the ATPase alpha/beta chains family. As to quaternary structure, F-type ATPases have 2 components, CF(1) - the catalytic core - and CF(0) - the membrane proton channel. CF(1) has five subunits: alpha(3), beta(3), gamma(1), delta(1), epsilon(1). CF(0) has three main subunits: a(1), b(2) and c(9-12). The alpha and beta chains form an alternating ring which encloses part of the gamma chain. CF(1) is attached to CF(0) by a central stalk formed by the gamma and epsilon chains, while a peripheral stalk is formed by the delta and b chains.

It localises to the cell inner membrane. It carries out the reaction ATP + H2O + 4 H(+)(in) = ADP + phosphate + 5 H(+)(out). Its function is as follows. Produces ATP from ADP in the presence of a proton gradient across the membrane. The catalytic sites are hosted primarily by the beta subunits. This chain is ATP synthase subunit beta, found in Helicobacter pylori (strain P12).